Consider the following 213-residue polypeptide: dITP/XTP pyrophosphatase (213 aa).

7 to 12 is a substrate binding site; it reads TSNLDK. Catalysis depends on aspartate 74, which acts as the Proton acceptor. Aspartate 74 provides a ligand contact to Mg(2+). Residues serine 75, 165–168, lysine 188, and 193–194 contribute to the substrate site; these read FGYD and HR.

Belongs to the HAM1 NTPase family. As to quaternary structure, homodimer. The cofactor is Mg(2+).

It carries out the reaction XTP + H2O = XMP + diphosphate + H(+). The catalysed reaction is dITP + H2O = dIMP + diphosphate + H(+). It catalyses the reaction ITP + H2O = IMP + diphosphate + H(+). In terms of biological role, pyrophosphatase that catalyzes the hydrolysis of nucleoside triphosphates to their monophosphate derivatives, with a high preference for the non-canonical purine nucleotides XTP (xanthosine triphosphate), dITP (deoxyinosine triphosphate) and ITP. Seems to function as a house-cleaning enzyme that removes non-canonical purine nucleotides from the nucleotide pool, thus preventing their incorporation into DNA/RNA and avoiding chromosomal lesions. In Campylobacter concisus (strain 13826), this protein is dITP/XTP pyrophosphatase.